The following is a 121-amino-acid chain: NADH-quinone oxidoreductase subunit A (121 aa).

3 helical membrane-spanning segments follow: residues 8–28, 65–85, and 93–113; these read YLPI…TIIG, LVAI…PWAI, and QGMI…FYII.

This sequence belongs to the complex I subunit 3 family. NDH-1 is composed of 14 different subunits. Subunits NuoA, H, J, K, L, M, N constitute the membrane sector of the complex.

Its subcellular location is the cell inner membrane. It carries out the reaction a quinone + NADH + 5 H(+)(in) = a quinol + NAD(+) + 4 H(+)(out). Functionally, NDH-1 shuttles electrons from NADH, via FMN and iron-sulfur (Fe-S) centers, to quinones in the respiratory chain. The immediate electron acceptor for the enzyme in this species is believed to be a menaquinone. Couples the redox reaction to proton translocation (for every two electrons transferred, four hydrogen ions are translocated across the cytoplasmic membrane), and thus conserves the redox energy in a proton gradient. This is NADH-quinone oxidoreductase subunit A from Flavobacterium psychrophilum (strain ATCC 49511 / DSM 21280 / CIP 103535 / JIP02/86).